The following is a 241-amino-acid chain: Ribonuclease PH (241 aa).

Phosphate contacts are provided by residues Arg-86 and 124–126; that span reads GTR.

This sequence belongs to the RNase PH family. As to quaternary structure, homohexameric ring arranged as a trimer of dimers.

It carries out the reaction tRNA(n+1) + phosphate = tRNA(n) + a ribonucleoside 5'-diphosphate. In terms of biological role, phosphorolytic 3'-5' exoribonuclease that plays an important role in tRNA 3'-end maturation. Removes nucleotide residues following the 3'-CCA terminus of tRNAs; can also add nucleotides to the ends of RNA molecules by using nucleoside diphosphates as substrates, but this may not be physiologically important. Probably plays a role in initiation of 16S rRNA degradation (leading to ribosome degradation) during starvation. This Hamiltonella defensa subsp. Acyrthosiphon pisum (strain 5AT) protein is Ribonuclease PH.